We begin with the raw amino-acid sequence, 147 residues long: Large ribosomal subunit protein uL13 (147 aa).

This sequence belongs to the universal ribosomal protein uL13 family. In terms of assembly, part of the 50S ribosomal subunit.

This protein is one of the early assembly proteins of the 50S ribosomal subunit, although it is not seen to bind rRNA by itself. It is important during the early stages of 50S assembly. The sequence is that of Large ribosomal subunit protein uL13 from Corynebacterium glutamicum (strain R).